The primary structure comprises 553 residues: Arginine--tRNA ligase (553 aa).

Positions 130–140 (ANPTGDLHIGH) match the 'HIGH' region motif.

This sequence belongs to the class-I aminoacyl-tRNA synthetase family. As to quaternary structure, monomer.

It is found in the cytoplasm. The catalysed reaction is tRNA(Arg) + L-arginine + ATP = L-arginyl-tRNA(Arg) + AMP + diphosphate. The chain is Arginine--tRNA ligase from Staphylococcus aureus (strain USA300 / TCH1516).